Reading from the N-terminus, the 260-residue chain is uncharacterized protein (260 aa).

A Radical SAM core domain is found at 6–239; that stretch reads AGVRSGVVVS…VAVAETYLPN (234 aa).

This is an uncharacterized protein from Sinorhizobium fredii (strain NBRC 101917 / NGR234).